The following is a 709-amino-acid chain: Phosphomethylpyrimidine synthase (709 aa).

Residues 1–13 (MNIRSNPDTTLPA) are compositionally biased toward polar residues. Disordered stretches follow at residues 1-21 (MNIR…PLPS) and 125-168 (DAPA…GREQ). Substrate is bound by residues Asn-274, Met-303, Tyr-332, His-368, 388–390 (SRG), 429–432 (DGLR), and Glu-468. His-472 provides a ligand contact to Zn(2+). Tyr-495 is a substrate binding site. His-536 contributes to the Zn(2+) binding site. [4Fe-4S] cluster-binding residues include Cys-616, Cys-619, and Cys-624.

This sequence belongs to the ThiC family. As to quaternary structure, homodimer. [4Fe-4S] cluster serves as cofactor.

It carries out the reaction 5-amino-1-(5-phospho-beta-D-ribosyl)imidazole + S-adenosyl-L-methionine = 4-amino-2-methyl-5-(phosphooxymethyl)pyrimidine + CO + 5'-deoxyadenosine + formate + L-methionine + 3 H(+). Its pathway is cofactor biosynthesis; thiamine diphosphate biosynthesis. Catalyzes the synthesis of the hydroxymethylpyrimidine phosphate (HMP-P) moiety of thiamine from aminoimidazole ribotide (AIR) in a radical S-adenosyl-L-methionine (SAM)-dependent reaction. In Rhodopseudomonas palustris (strain BisB18), this protein is Phosphomethylpyrimidine synthase.